Here is a 154-residue protein sequence, read N- to C-terminus: Putative F-box protein At2g11200 (154 aa).

Residues 5–51 (TTAMSDLPRDLEEEVLSRVQLASLRAVRTTCKKWNRRLSKYRFTKKY) form the F-box domain.

This chain is Putative F-box protein At2g11200, found in Arabidopsis thaliana (Mouse-ear cress).